The sequence spans 208 residues: N-(5'-phosphoribosyl)anthranilate isomerase (208 aa).

The protein belongs to the TrpF family.

The catalysed reaction is N-(5-phospho-beta-D-ribosyl)anthranilate = 1-(2-carboxyphenylamino)-1-deoxy-D-ribulose 5-phosphate. It functions in the pathway amino-acid biosynthesis; L-tryptophan biosynthesis; L-tryptophan from chorismate: step 3/5. The chain is N-(5'-phosphoribosyl)anthranilate isomerase from Methanococcus vannielii (strain ATCC 35089 / DSM 1224 / JCM 13029 / OCM 148 / SB).